A 462-amino-acid polypeptide reads, in one-letter code: Acetate--CoA ligase [ADP-forming] I subunit alpha (462 aa).

This sequence belongs to the acetate CoA ligase alpha subunit family. As to quaternary structure, heterotetramer of two alpha and two beta subunits.

It localises to the cytoplasm. The enzyme catalyses acetate + ATP + CoA = acetyl-CoA + ADP + phosphate. Its activity is regulated as follows. Activity is dependent on magnesium. Functionally, catalyzes the reversible formation of acetate and ATP from acetyl-CoA by using ADP and phosphate. Can use other substrates such as isobutyryl-CoA, propionyl-CoA and butyryl-CoA, but not indoleacetyl-CoA, phenylacetyl-CoA or succinyl-CoA. Seems to be involved primarily in the conversion of acetyl-CoA to acetate. Participates in the degradation of branched-chain amino acids via branched-chain-acyl-CoA esters. In Pyrococcus furiosus (strain ATCC 43587 / DSM 3638 / JCM 8422 / Vc1), this protein is Acetate--CoA ligase [ADP-forming] I subunit alpha.